Reading from the N-terminus, the 423-residue chain is MDFGLLPPEVNSSRMYSGPGPESMLAAAAAWDGVAAELTSAAVSYGSVVSTLIVEPWMGPAAAAMAAAATPYVGWLAATAALAKETATQARAAAEAFGTAFAMTVPPSLVAANRSRLMSLVAANILGQNSAAIAATQAEYAEMWAQDAAVMYSYEGASAAASALPPFTPPVQGTGPAGPAAAAAATQAAGAGAVADAQATLAQLPPGILSDILSALAANADPLTSGLLGIASTLNPQVGSAQPIVIPTPIGELDVIALYIASIATGSIALAITNTARPWHIGLYGNAGGLGPTQGHPLSSATDEPEPHWGPFGGAAPVSAGVGHAALVGALSVPHSWTTAAPEIQLAVQATPTFSSSAGADPTALNGMPAGLLSGMALASLAARGTTGGGGTRSGTSTDGQEDGRKPPVVVIREQPPPGNPPR.

The tract at residues A383–R423 is disordered.

This sequence belongs to the mycobacterial PPE family.

This is an uncharacterized protein from Mycobacterium tuberculosis (strain CDC 1551 / Oshkosh).